We begin with the raw amino-acid sequence, 76 residues long: Cytochrome c oxidase subunit 6C-2 (76 aa).

Residues 4–14 lie on the Mitochondrial matrix side of the membrane; the sequence is GALLPKPQMRG. The helical transmembrane segment at 15–55 threads the bilayer; sequence LLAKRLRVHIVGAFVVALGVAAAYKFGVAEPRKKAYADFYR. Residues 56–76 lie on the Mitochondrial intermembrane side of the membrane; sequence NYDSMKDFEEMRQAGVFQSAK. Ser-74 bears the Phosphoserine mark.

Belongs to the cytochrome c oxidase subunit 6c family. In terms of assembly, component of the cytochrome c oxidase (complex IV, CIV), a multisubunit enzyme composed of 14 subunits. The complex is composed of a catalytic core of 3 subunits MT-CO1, MT-CO2 and MT-CO3, encoded in the mitochondrial DNA, and 11 supernumerary subunits COX4I, COX5A, COX5B, COX6A, COX6B, COX6C, COX7A, COX7B, COX7C, COX8 and NDUFA4, which are encoded in the nuclear genome. The complex exists as a monomer or a dimer and forms supercomplexes (SCs) in the inner mitochondrial membrane with NADH-ubiquinone oxidoreductase (complex I, CI) and ubiquinol-cytochrome c oxidoreductase (cytochrome b-c1 complex, complex III, CIII), resulting in different assemblies (supercomplex SCI(1)III(2)IV(1) and megacomplex MCI(2)III(2)IV(2)).

It localises to the mitochondrion inner membrane. The protein operates within energy metabolism; oxidative phosphorylation. Component of the cytochrome c oxidase, the last enzyme in the mitochondrial electron transport chain which drives oxidative phosphorylation. The respiratory chain contains 3 multisubunit complexes succinate dehydrogenase (complex II, CII), ubiquinol-cytochrome c oxidoreductase (cytochrome b-c1 complex, complex III, CIII) and cytochrome c oxidase (complex IV, CIV), that cooperate to transfer electrons derived from NADH and succinate to molecular oxygen, creating an electrochemical gradient over the inner membrane that drives transmembrane transport and the ATP synthase. Cytochrome c oxidase is the component of the respiratory chain that catalyzes the reduction of oxygen to water. Electrons originating from reduced cytochrome c in the intermembrane space (IMS) are transferred via the dinuclear copper A center (CU(A)) of subunit 2 and heme A of subunit 1 to the active site in subunit 1, a binuclear center (BNC) formed by heme A3 and copper B (CU(B)). The BNC reduces molecular oxygen to 2 water molecules using 4 electrons from cytochrome c in the IMS and 4 protons from the mitochondrial matrix. This chain is Cytochrome c oxidase subunit 6C-2 (Cox6c2), found in Rattus norvegicus (Rat).